The following is a 190-amino-acid chain: Adenine phosphoribosyltransferase (190 aa).

The protein belongs to the purine/pyrimidine phosphoribosyltransferase family. In terms of assembly, homodimer.

It localises to the cytoplasm. The enzyme catalyses AMP + diphosphate = 5-phospho-alpha-D-ribose 1-diphosphate + adenine. Its pathway is purine metabolism; AMP biosynthesis via salvage pathway; AMP from adenine: step 1/1. Catalyzes a salvage reaction resulting in the formation of AMP, that is energically less costly than de novo synthesis. The polypeptide is Adenine phosphoribosyltransferase (Cupriavidus taiwanensis (strain DSM 17343 / BCRC 17206 / CCUG 44338 / CIP 107171 / LMG 19424 / R1) (Ralstonia taiwanensis (strain LMG 19424))).